Here is a 422-residue protein sequence, read N- to C-terminus: S-adenosylmethionine synthase (422 aa).

His-15 contributes to the ATP binding site. Asp-17 contacts Mg(2+). Glu-43 provides a ligand contact to K(+). 2 residues coordinate L-methionine: Glu-56 and Gln-99. The segment at 99–109 (QSPDISRGVTE) is flexible loop. Residues 166-168 (DGK), 232-233 (RF), Asp-241, 247-248 (RK), Ala-264, and Lys-268 each bind ATP. Asp-241 is a binding site for L-methionine. Lys-272 is an L-methionine binding site. Residues 390 to 422 (AVPATTNGAGSKNGSGSKKEPKRKGKKETGAQA) form a disordered region.

Belongs to the AdoMet synthase family. As to quaternary structure, homotetramer; dimer of dimers. It depends on Mg(2+) as a cofactor. The cofactor is K(+).

It localises to the cytoplasm. It carries out the reaction L-methionine + ATP + H2O = S-adenosyl-L-methionine + phosphate + diphosphate. It participates in amino-acid biosynthesis; S-adenosyl-L-methionine biosynthesis; S-adenosyl-L-methionine from L-methionine: step 1/1. In terms of biological role, catalyzes the formation of S-adenosylmethionine (AdoMet) from methionine and ATP. The overall synthetic reaction is composed of two sequential steps, AdoMet formation and the subsequent tripolyphosphate hydrolysis which occurs prior to release of AdoMet from the enzyme. The chain is S-adenosylmethionine synthase from Sorangium cellulosum (strain So ce56) (Polyangium cellulosum (strain So ce56)).